Reading from the N-terminus, the 1135-residue chain is Phytochrome C (1135 aa).

Residues 1–11 (MSSPLNNRGTC) are compositionally biased toward polar residues. Positions 1 to 26 (MSSPLNNRGTCSRSSSARSRHSARVV) are disordered. The 184-residue stretch at 216-399 (NLSLLCDVLV…VFGIQLNKEV (184 aa)) folds into the GAF domain. Cysteine 321 contacts phytochromobilin. 2 consecutive PAS domains span residues 618–688 (VTNE…LQGI) and 748–822 (IQGD…TKLS). The region spanning 902–1122 (YIHQELRNPL…IILIEFPVAQ (221 aa)) is the Histidine kinase domain.

This sequence belongs to the phytochrome family. Homodimer. In terms of processing, contains one covalently linked phytochromobilin chromophore.

Its function is as follows. Regulatory photoreceptor which exists in two forms that are reversibly interconvertible by light: the Pr form that absorbs maximally in the red region of the spectrum and the Pfr form that absorbs maximally in the far-red region. Photoconversion of Pr to Pfr induces an array of morphogenic responses, whereas reconversion of Pfr to Pr cancels the induction of those responses. Pfr controls the expression of a number of nuclear genes including those encoding the small subunit of ribulose-bisphosphate carboxylase, chlorophyll A/B binding protein, protochlorophyllide reductase, rRNA, etc. It also controls the expression of its own gene(s) in a negative feedback fashion. The sequence is that of Phytochrome C (PHYC) from Sorghum bicolor (Sorghum).